A 342-amino-acid chain; its full sequence is Anthranilate phosphoribosyltransferase (342 aa).

Residues glycine 81, 84 to 85 (GD), 91 to 94 (NVSS), 109 to 117 (KHGNRGVSS), and serine 121 each bind 5-phospho-alpha-D-ribose 1-diphosphate. Residue glycine 81 coordinates anthranilate. Mg(2+) is bound at residue serine 93. Residue asparagine 112 coordinates anthranilate. Arginine 167 contacts anthranilate. The Mg(2+) site is built by aspartate 226 and glutamate 227.

Belongs to the anthranilate phosphoribosyltransferase family. In terms of assembly, homodimer. The cofactor is Mg(2+).

The catalysed reaction is N-(5-phospho-beta-D-ribosyl)anthranilate + diphosphate = 5-phospho-alpha-D-ribose 1-diphosphate + anthranilate. Its pathway is amino-acid biosynthesis; L-tryptophan biosynthesis; L-tryptophan from chorismate: step 2/5. Catalyzes the transfer of the phosphoribosyl group of 5-phosphorylribose-1-pyrophosphate (PRPP) to anthranilate to yield N-(5'-phosphoribosyl)-anthranilate (PRA). The sequence is that of Anthranilate phosphoribosyltransferase from Marinobacter nauticus (strain ATCC 700491 / DSM 11845 / VT8) (Marinobacter aquaeolei).